The sequence spans 126 residues: Aspartate 1-decarboxylase (126 aa).

The Schiff-base intermediate with substrate; via pyruvic acid role is filled by S25. A Pyruvic acid (Ser) modification is found at S25. T57 contacts substrate. Y58 serves as the catalytic Proton donor. 73–75 (GAA) provides a ligand contact to substrate.

It belongs to the PanD family. In terms of assembly, heterooctamer of four alpha and four beta subunits. The cofactor is pyruvate. Post-translationally, is synthesized initially as an inactive proenzyme, which is activated by self-cleavage at a specific serine bond to produce a beta-subunit with a hydroxyl group at its C-terminus and an alpha-subunit with a pyruvoyl group at its N-terminus.

The protein resides in the cytoplasm. The catalysed reaction is L-aspartate + H(+) = beta-alanine + CO2. It participates in cofactor biosynthesis; (R)-pantothenate biosynthesis; beta-alanine from L-aspartate: step 1/1. Functionally, catalyzes the pyruvoyl-dependent decarboxylation of aspartate to produce beta-alanine. The polypeptide is Aspartate 1-decarboxylase (Escherichia coli O6:K15:H31 (strain 536 / UPEC)).